We begin with the raw amino-acid sequence, 436 residues long: Amino acid transporter AVT3C (436 aa).

Over residues 1-13 (MGFQNEASSSSYT) the composition is skewed to polar residues. The tract at residues 1–21 (MGFQNEASSSSYTLKIPPPAR) is disordered. The Cytoplasmic segment spans residues 1–38 (MGFQNEASSSSYTLKIPPPAREDSPLLGKGPPLSSQFK). Residues 39–59 (TFANVFIAVVGAGVLGLPYAF) form a helical membrane-spanning segment. Topologically, residues 60 to 65 (KRTGWL) are vacuolar. The chain crosses the membrane as a helical span at residues 66-86 (MGVLLLVSVSVLTHHCMMLLV). Over 87-118 (YTRRKLDSFNAGISKIGSFGDLGFAVCGSLGR) the chain is Cytoplasmic. A helical membrane pass occupies residues 119–139 (IVVDLFIILSQAGFCVGYLIF). The Vacuolar portion of the chain corresponds to 140–166 (IGTTLANLSDPESPTSLRHQFTRLGSE). Residues 167 to 187 (FLGVSSKSLYIWGCFPFQLGL) traverse the membrane as a helical segment. Residues 188–195 (NSIKTLTH) lie on the Cytoplasmic side of the membrane. Residues 196–216 (LAPLSIFADIVDLGAMAVVIV) traverse the membrane as a helical segment. Residues 217–228 (EDSMIILKQRPD) are Vacuolar-facing. The chain crosses the membrane as a helical span at residues 229–249 (VVAFGGMSLFLYGMGVAVYSF). Residues 250 to 273 (EGVGMVLPLESEMKDKDKFGKVLA) are Cytoplasmic-facing. Residues 274–294 (LGMGFISLIYIAFGILGYLAF) form a helical membrane-spanning segment. The Vacuolar portion of the chain corresponds to 295 to 309 (GEDTMDIITANLGAG). Residues 310-330 (LVSTVVQLGLCINLFFTFPLM) form a helical membrane-spanning segment. The Cytoplasmic portion of the chain corresponds to 331-352 (MNPVFEIVERRFSRGMYSAWLR). A helical transmembrane segment spans residues 353 to 373 (WVLVLAVTLVALFVPNFADFL). Residues 374 to 376 (SLV) lie on the Vacuolar side of the membrane. A helical transmembrane segment spans residues 377–397 (GSSTCCVLGFVLPALFHLLVF). Residues 398–411 (KEEMGWLQWSSDTA) lie on the Cytoplasmic side of the membrane. A helical membrane pass occupies residues 412–432 (IVVLGVVLAVSGTWSSLSEIF). The Vacuolar portion of the chain corresponds to 433–436 (SVKV).

The protein belongs to the amino acid/polyamine transporter 2 family. Amino acid/auxin permease (AAAP) (TC 2.A.18.8) subfamily. In terms of tissue distribution, ubiquitous.

It localises to the vacuole membrane. In terms of biological role, translocates preferentially neutral amino acids from the vacuole to the cytoplasm. In Arabidopsis thaliana (Mouse-ear cress), this protein is Amino acid transporter AVT3C.